The chain runs to 388 residues: Methylthioribose-1-phosphate isomerase (388 aa).

Asp258 (proton donor) is an active-site residue.

The protein belongs to the eIF-2B alpha/beta/delta subunits family. MtnA subfamily.

The protein resides in the cytoplasm. The protein localises to the nucleus. It catalyses the reaction 5-(methylsulfanyl)-alpha-D-ribose 1-phosphate = 5-(methylsulfanyl)-D-ribulose 1-phosphate. The protein operates within amino-acid biosynthesis; L-methionine biosynthesis via salvage pathway; L-methionine from S-methyl-5-thio-alpha-D-ribose 1-phosphate: step 1/6. Its function is as follows. Catalyzes the interconversion of methylthioribose-1-phosphate (MTR-1-P) into methylthioribulose-1-phosphate (MTRu-1-P). This Sordaria macrospora (strain ATCC MYA-333 / DSM 997 / K(L3346) / K-hell) protein is Methylthioribose-1-phosphate isomerase.